Reading from the N-terminus, the 110-residue chain is Large ribosomal subunit protein uL23c (110 aa).

This sequence belongs to the universal ribosomal protein uL23 family. As to quaternary structure, part of the 50S ribosomal subunit.

It is found in the plastid. The protein localises to the chloroplast. Binds to 23S rRNA. The polypeptide is Large ribosomal subunit protein uL23c (rpl23) (Porphyra purpurea (Red seaweed)).